The primary structure comprises 313 residues: Dimethyladenosine transferase (313 aa).

H37, L39, G64, E85, D113, and N128 together coordinate S-adenosyl-L-methionine.

This sequence belongs to the class I-like SAM-binding methyltransferase superfamily. rRNA adenine N(6)-methyltransferase family. In terms of assembly, part of the small subunit (SSU) processome, composed of more than 70 proteins and the RNA chaperone small nucleolar RNA (snoRNA) U3.

It is found in the nucleus. It localises to the nucleoplasm. The protein resides in the nucleolus. It carries out the reaction adenosine(1779)/adenosine(1780) in 18S rRNA + 4 S-adenosyl-L-methionine = N(6)-dimethyladenosine(1779)/N(6)-dimethyladenosine(1780) in 18S rRNA + 4 S-adenosyl-L-homocysteine + 4 H(+). Its function is as follows. Specifically dimethylates two adjacent adenosines in the loop of a conserved hairpin near the 3'-end of 18S rRNA in the 40S particle. Involved in the pre-rRNA processing steps leading to small-subunit rRNA production independently of its RNA-modifying catalytic activity. Part of the small subunit (SSU) processome, first precursor of the small eukaryotic ribosomal subunit. During the assembly of the SSU processome in the nucleolus, many ribosome biogenesis factors, an RNA chaperone and ribosomal proteins associate with the nascent pre-rRNA and work in concert to generate RNA folding, modifications, rearrangements and cleavage as well as targeted degradation of pre-ribosomal RNA by the RNA exosome. The chain is Dimethyladenosine transferase (Dimt1) from Mus musculus (Mouse).